Consider the following 395-residue polypeptide: Elongation factor Tu (395 aa).

One can recognise a tr-type G domain in the interval 10 to 204 (KPHVNIGTIG…AVDEYIPTPQ (195 aa)). The segment at 19-26 (GHVDHGKT) is G1. GTP is bound at residue 19-26 (GHVDHGKT). A Mg(2+)-binding site is contributed by T26. The G2 stretch occupies residues 60–64 (GITIS). The tract at residues 81–84 (DCPG) is G3. GTP contacts are provided by residues 81–85 (DCPGH) and 136–139 (NKCD). The interval 136-139 (NKCD) is G4. The interval 174 to 176 (SAL) is G5.

This sequence belongs to the TRAFAC class translation factor GTPase superfamily. Classic translation factor GTPase family. EF-Tu/EF-1A subfamily. As to quaternary structure, monomer.

Its subcellular location is the cytoplasm. It carries out the reaction GTP + H2O = GDP + phosphate + H(+). Its function is as follows. GTP hydrolase that promotes the GTP-dependent binding of aminoacyl-tRNA to the A-site of ribosomes during protein biosynthesis. The chain is Elongation factor Tu from Geobacillus sp. (strain WCH70).